The chain runs to 375 residues: Trichodiene synthase (375 aa).

Belongs to the trichodiene synthase family.

It carries out the reaction (2E,6E)-farnesyl diphosphate = trichodiene + diphosphate. It participates in sesquiterpene biosynthesis; trichothecene biosynthesis. In terms of biological role, TS is a member of the terpene cyclase group of enzymes. It catalyzes the isomerization and cyclization of farnesyl pyro-phosphate to form trichodiene, the first cyclic intermediate in the biosynthetic pathway for trichothecenes. It serves to branch trichothecene biosynthesis from the isoprenoid pathway. This chain is Trichodiene synthase (TRI5), found in Fusarium cerealis (Fusarium crookwellense).